A 372-amino-acid chain; its full sequence is Chemerin-like receptor 1 (372 aa).

Over 1-39 (MEYEGYNDSSIYGEEYSDGSDYIVDLEEAGPLEAKVAEV) the chain is Extracellular. N-linked (GlcNAc...) asparagine glycosylation occurs at Asn7. Residues 40–62 (FLVVIYSLVCFLGILGNGLVIVI) form a helical membrane-spanning segment. The Cytoplasmic segment spans residues 63–73 (ATFKMKKTVNT). A helical transmembrane segment spans residues 74–95 (VWFVNLAVADFLFNIFLPIHIT). Residues 96 to 112 (YAAMDYHWVFGKAMCKI) lie on the Extracellular side of the membrane. Residues Cys110 and Cys188 are joined by a disulfide bond. The helical transmembrane segment at 113-133 (SSFLLSHNMYTSVFLLTVISF) threads the bilayer. Over 134–152 (DRCISVLLPVWSQNHRSVR) the chain is Cytoplasmic. A helical membrane pass occupies residues 153–174 (LAYMTCVVVWVLAFFLSSPSLV). Over 175–223 (FRDTVSTSHGKITCFNNFSLAAPEPFSHSTHPRTDPVGYSRHVAVTVTR) the chain is Extracellular. N-linked (GlcNAc...) asparagine glycosylation occurs at Asn191. The helical transmembrane segment at 224–244 (FLCGFLIPVFIITACYLTIVF) threads the bilayer. Residues 245 to 260 (KLQRNRLAKTKKPFKI) are Cytoplasmic-facing. Residues 261-281 (IITIIITFFLCWCPYHTLYLL) traverse the membrane as a helical segment. At 282–299 (ELHHTAVPASVFSLGLPL) the chain is on the extracellular side. Residues 300 to 319 (ATAVAIANSCMNPILYVFMG) form a helical membrane-spanning segment. The Cytoplasmic portion of the chain corresponds to 320-372 (HDFKKFKVALFSRLVNALSEDTGPSSYPSHRSFTKMSSLIEKASVNEKETSTL). Phosphoserine is present on Ser338. The residue at position 341 (Thr341) is a Phosphothreonine. Ser348, Ser351, and Ser357 each carry phosphoserine. Thr371 carries the post-translational modification Phosphothreonine.

This sequence belongs to the chemokine-like receptor (CMKLR) family. High expression in heart and lung, low in small intestines, colon, kidney, liver, uterus and brain.

It localises to the cell membrane. Functionally, receptor for the chemoattractant adipokine chemerin/RARRES2 and for the omega-3 fatty acid derived molecule resolvin E1. Interaction with RARRES2 initiates activation of G proteins G(i)/G(o) and beta-arrestin pathways inducing cellular responses via second messenger pathways such as intracellular calcium mobilization, phosphorylation of MAP kinases MAPK1/MAPK3 (ERK1/2), TYRO3, MAPK14/P38MAPK and PI3K leading to multifunctional effects, like, reduction of immune responses, enhancing of adipogenesis and angionesis. Resolvin E1 down-regulates cytokine production in macrophages by reducing the activation of MAPK1/3 (ERK1/2) and NF-kappa-B. Positively regulates adipogenesis and adipocyte metabolism. The chain is Chemerin-like receptor 1 (Cmklr1) from Rattus norvegicus (Rat).